A 740-amino-acid chain; its full sequence is Isocitrate dehydrogenase [NADP] 2 (740 aa).

The NADP(+) site is built by N83 and S85. Residues S130, N133, R137, R143, and K253 each coordinate D-threo-isocitrate. N133 contributes to the NADP(+) binding site. Mg(2+) is bound at residue D348. Residues Y418 and R546 each coordinate D-threo-isocitrate. Positions 547 and 551 each coordinate Mg(2+). Residues S584, H588, R599, D601, and R648 each coordinate NADP(+).

Belongs to the monomeric-type IDH family. In terms of assembly, monomer. It depends on Mg(2+) as a cofactor. Mn(2+) is required as a cofactor.

The enzyme catalyses D-threo-isocitrate + NADP(+) = 2-oxoglutarate + CO2 + NADPH. IDH activity is not significantly affected by monovalent cations. The combined addition of Mn(2+) and another divalent cation results in the decrease of the activity. Its function is as follows. Catalyzes the oxidative decarboxylation of isocitrate to 2-oxoglutarate and carbon dioxide with the concomitant reduction of NADP(+). Cannot use NAD(+). The sequence is that of Isocitrate dehydrogenase [NADP] 2 from Psychrobacter sp. (strain 13A).